Reading from the N-terminus, the 614-residue chain is Zinc metalloproteinase dpy-31 (614 aa).

The first 24 residues, 1 to 24 (MSLLRCTTLLLVVVAIALPPCILG), serve as a signal peptide directing secretion. A propeptide spanning residues 25 to 150 (YSLHDGSRLD…KTGQRRVKRK (126 aa)) is cleaved from the precursor. The 200-residue stretch at 150–349 (KFIGSDLRRW…IRLMNKIYCS (200 aa)) folds into the Peptidase M12A domain. Asn190 carries N-linked (GlcNAc...) asparagine glycosylation. 5 disulfides stabilise this stretch: Cys193–Cys348, Cys216–Cys237, Cys352–Cys372, Cys374–Cys383, and Cys394–Cys422. His245 is a binding site for Zn(2+). The active site involves Glu246. Zn(2+)-binding residues include His249 and His255. One can recognise an EGF-like domain in the interval 344-384 (NKIYCSNVCSRKLPCQRGGYTDPRRCDRCRCPDGFTGQFCE). One can recognise a CUB domain in the interval 394-510 (CGGRIQVNGG…RGFEARARAL (117 aa)). Asn461 is a glycosylation site (N-linked (GlcNAc...) asparagine). A TSP type-1 domain is found at 513 to 562 (NGQWASWSPWTPCTASCGACGSRMRTRVCSHGACAGEPVENQVCNTHPCN). 3 disulfide bridges follow: Cys525–Cys556, Cys529–Cys561, and Cys541–Cys546.

It depends on Zn(2+) as a cofactor.

It is found in the secreted. Its activity is regulated as follows. Inhibited by marimastat and tripeptide hydroxamic acids. Inhibited by 1,10-phenanthroline. Metalloprotease which cleaves the carboxyl terminus of procollagens to mature collagens. Probably involved in cuticular collagen maturation. This Teladorsagia circumcincta (Brown stomach worm) protein is Zinc metalloproteinase dpy-31.